A 216-amino-acid chain; its full sequence is MPGITLGDTVPNLEVETTHDKFKLHDYFANSWTVLFSHPGDFTPVCTTELGAMAKYAHEFDKRGVKLLGLSCDDVQSHKDWIKDIEAFNHGSKVNYPIIADPNKEIIPQLNMIDPIENGPSRALHIVGPDSKIKLSFLYPSTTGRNMDEVLRALDSLLMASKHNNKIATPVNWKPDQPVVISPAVSDEEAKKMFPQGFKTADLPSKKGYLRHTEVS.

The Thioredoxin domain maps to 4 to 159 (ITLGDTVPNL…VLRALDSLLM (156 aa)). The active-site Cysteine sulfenic acid (-SOH) intermediate is the Cys46. A Bipartite nuclear localization signal motif is present at residues 191-214 (KKMFPQGFKTADLPSKKGYLRHTE).

It belongs to the peroxiredoxin family. Prx6 subfamily. As to expression, predominantly expressed in seed. Expressed in endosperm, embryo and aleurone cells. Also detected in young seedlings, abscission zones, stem branching points.

It is found in the nucleus. It localises to the cytoplasm. It catalyses the reaction a hydroperoxide + [thioredoxin]-dithiol = an alcohol + [thioredoxin]-disulfide + H2O. Functionally, thiol-specific peroxidase that catalyzes the reduction of hydrogen peroxide and organic hydroperoxides to water and alcohols, respectively. Seems to contribute to the inhibition of germination during stress. The polypeptide is 1-Cys peroxiredoxin PER1 (PER1) (Arabidopsis thaliana (Mouse-ear cress)).